We begin with the raw amino-acid sequence, 37 residues long: Photosystem I reaction center subunit VIII (37 aa).

The helical transmembrane segment at isoleucine 10–tyrosine 30 threads the bilayer.

This sequence belongs to the PsaI family.

Its subcellular location is the plastid. It localises to the chloroplast thylakoid membrane. Functionally, may help in the organization of the PsaL subunit. This is Photosystem I reaction center subunit VIII from Gossypium barbadense (Sea Island cotton).